The primary structure comprises 420 residues: UDP-N-acetylglucosamine 1-carboxyvinyltransferase (420 aa).

Position 22 to 23 (22 to 23 (KN)) interacts with phosphoenolpyruvate. A UDP-N-acetyl-alpha-D-glucosamine-binding site is contributed by Arg91. The active-site Proton donor is the Cys115. Position 115 is a 2-(S-cysteinyl)pyruvic acid O-phosphothioketal (Cys115). UDP-N-acetyl-alpha-D-glucosamine-binding positions include 120–124 (RPVDL), 160–163 (KVSV), Asp305, and Ile327.

Belongs to the EPSP synthase family. MurA subfamily.

It is found in the cytoplasm. It catalyses the reaction phosphoenolpyruvate + UDP-N-acetyl-alpha-D-glucosamine = UDP-N-acetyl-3-O-(1-carboxyvinyl)-alpha-D-glucosamine + phosphate. The protein operates within cell wall biogenesis; peptidoglycan biosynthesis. In terms of biological role, cell wall formation. Adds enolpyruvyl to UDP-N-acetylglucosamine. This is UDP-N-acetylglucosamine 1-carboxyvinyltransferase from Erwinia tasmaniensis (strain DSM 17950 / CFBP 7177 / CIP 109463 / NCPPB 4357 / Et1/99).